The primary structure comprises 433 residues: Glutamate-1-semialdehyde 2,1-aminomutase (433 aa).

At Lys272 the chain carries N6-(pyridoxal phosphate)lysine.

This sequence belongs to the class-III pyridoxal-phosphate-dependent aminotransferase family. HemL subfamily. In terms of assembly, homodimer. The cofactor is pyridoxal 5'-phosphate.

The protein localises to the cytoplasm. The catalysed reaction is (S)-4-amino-5-oxopentanoate = 5-aminolevulinate. It functions in the pathway porphyrin-containing compound metabolism; protoporphyrin-IX biosynthesis; 5-aminolevulinate from L-glutamyl-tRNA(Glu): step 2/2. This is Glutamate-1-semialdehyde 2,1-aminomutase from Magnetococcus marinus (strain ATCC BAA-1437 / JCM 17883 / MC-1).